The primary structure comprises 650 residues: Acetyl-coenzyme A synthetase (650 aa).

CoA-binding positions include Arg191–Arg194, Thr311, and Asn335. ATP contacts are provided by residues Gly387–Pro389, Asp411–Thr416, Asp501, and Arg516. Position 524 (Ser524) interacts with CoA. Arg527 contacts ATP. Val538, His540, and Ile543 together coordinate Mg(2+). Arg585 is a binding site for CoA. Residue Lys610 is modified to N6-acetyllysine.

This sequence belongs to the ATP-dependent AMP-binding enzyme family. The cofactor is Mg(2+). Acetylated. Deacetylation by the SIR2-homolog deacetylase activates the enzyme.

It catalyses the reaction acetate + ATP + CoA = acetyl-CoA + AMP + diphosphate. Functionally, catalyzes the conversion of acetate into acetyl-CoA (AcCoA), an essential intermediate at the junction of anabolic and catabolic pathways. AcsA undergoes a two-step reaction. In the first half reaction, AcsA combines acetate with ATP to form acetyl-adenylate (AcAMP) intermediate. In the second half reaction, it can then transfer the acetyl group from AcAMP to the sulfhydryl group of CoA, forming the product AcCoA. This Vibrio vulnificus (strain YJ016) protein is Acetyl-coenzyme A synthetase.